The primary structure comprises 80 residues: Kappa-actitoxin-Avd4i (80 aa).

An N-terminal signal peptide occupies residues 1–19 (MNKALFLCLVVLCAAVVFA). Positions 20–31 (AEDLQKAKHAPF) are excised as a propeptide. 3 disulfide bridges follow: Cys41-Cys76, Cys43-Cys69, and Cys59-Cys77.

It belongs to the sea anemone type 3 (BDS) potassium channel toxin family. Weakly expressed in the ectodermal tissue from the distal and proximal tentacles, body wall, and oral disk.

The protein resides in the secreted. Its subcellular location is the nematocyst. Its function is as follows. Blocks Kv3 voltage-gated potassium channels. Reduces blood pressure. The polypeptide is Kappa-actitoxin-Avd4i (Anemonia viridis (Snakelocks anemone)).